The primary structure comprises 65 residues: Large ribosomal subunit protein bL33c (65 aa).

This sequence belongs to the bacterial ribosomal protein bL33 family.

The protein resides in the plastid. It localises to the chloroplast. The protein is Large ribosomal subunit protein bL33c of Chara vulgaris (Common stonewort).